A 291-amino-acid chain; its full sequence is Putative phosphatase MG263 (291 aa).

Catalysis depends on aspartate 11, which acts as the Nucleophile. Mg(2+) is bound at residue aspartate 11. Phosphate is bound at residue leucine 12. Aspartate 13 lines the Mg(2+) pocket. Residues 60–61 (TG) and lysine 217 each bind phosphate. Aspartate 241 lines the Mg(2+) pocket. Asparagine 244 serves as a coordination point for phosphate.

This sequence belongs to the HAD-like hydrolase superfamily. Cof family. Requires Mg(2+) as cofactor.

This chain is Putative phosphatase MG263, found in Mycoplasma genitalium (strain ATCC 33530 / DSM 19775 / NCTC 10195 / G37) (Mycoplasmoides genitalium).